The chain runs to 761 residues: Zinc finger protein 711 (761 aa).

Glycyl lysine isopeptide (Lys-Gly) (interchain with G-Cter in SUMO2) cross-links involve residues Lys224, Lys235, and Lys296. 5 consecutive C2H2-type zinc fingers follow at residues 383 to 408 (YPCHICTKKFKSRGFLKRHMKNHPDH), 414 to 436 (YQCTDCDFTTNKKVSFHNHLESH), 476 to 499 (HKCKYCDYETAEQGLLNRHLLAVH), 505 to 527 (HVCVECGKGFRHPSELKKHMRTH), and 533 to 556 (YQCQYCAFRCADQSNLKTHIKSKH). The C2H2-type 6; atypical zinc-finger motif lies at 562-584 (YKCEHCPQAFGDERELQRHLDLF). Positions 564, 567, and 580 each coordinate Zn(2+). C2H2-type zinc fingers lie at residues 590–613 (HQCPHCDHKSTNSSDLKRHIISVH), 619–641 (HKCEVCDKGFHRPSELKKHSDIH), 647–670 (HQCRHCDFKTSDPFILSGHILSVH), 676–698 (LKCKRCKRGFRQQNELKKHMKTH), 704–727 (YQCEYCEYSTTDASGFKRHVISIH), and 733–755 (HRCEFCKKGFRRPSEKKQHIMRH).

Belongs to the krueppel C2H2-type zinc-finger protein family. As to quaternary structure, interacts with PHF8.

The protein resides in the nucleus. In terms of biological role, transcription regulator required for brain development. Probably acts as a transcription factor that binds to the promoter of target genes and recruits PHF8 histone demethylase, leading to activated expression of genes involved in neuron development, such as KDM5C. May compete with transcription factor ARX for activation of expression of KDM5C. This Mus musculus (Mouse) protein is Zinc finger protein 711 (Znf711).